Consider the following 498-residue polypeptide: Glycerol kinase (498 aa).

T14 lines the ADP pocket. ATP-binding residues include T14 and T15. Sn-glycerol 3-phosphate is bound at residue T14. An ADP-binding site is contributed by R18. The sn-glycerol 3-phosphate site is built by R84, E85, Y136, and D246. R84, E85, Y136, D246, and Q247 together coordinate glycerol. ADP-binding residues include T268 and G311. T268, G311, Q315, and G412 together coordinate ATP. Residues G412 and N416 each coordinate ADP.

The protein belongs to the FGGY kinase family.

The enzyme catalyses glycerol + ATP = sn-glycerol 3-phosphate + ADP + H(+). The protein operates within polyol metabolism; glycerol degradation via glycerol kinase pathway; sn-glycerol 3-phosphate from glycerol: step 1/1. Its activity is regulated as follows. Inhibited by fructose 1,6-bisphosphate (FBP). Its function is as follows. Key enzyme in the regulation of glycerol uptake and metabolism. Catalyzes the phosphorylation of glycerol to yield sn-glycerol 3-phosphate. In Leptospira biflexa serovar Patoc (strain Patoc 1 / Ames), this protein is Glycerol kinase.